A 256-amino-acid chain; its full sequence is CCAAT/enhancer-binding protein delta (256 aa).

S2 bears the N-acetylserine mark. 3 disordered regions span residues 18–40 (TAEP…AEPA), 92–121 (GGPA…APGS), and 139–206 (AAAQ…NQEM). Residue K108 forms a Glycyl lysine isopeptide (Lys-Gly) (interchain with G-Cter in SUMO) linkage. Positions 143 to 162 (PTPPASPEPPRRSPAPPAPG) are enriched in pro residues. Basic and acidic residues predominate over residues 164–188 (ARDKAAGKRGPDRGSPEYRQRRERN). The region spanning 178 to 241 (SPEYRQRRER…AGLRRFFKQL (64 aa)) is the bZIP domain. The basic motif stretch occupies residues 182 to 209 (RQRRERNNIAVRKSRDKAKRRNQEMQQK). The interval 213 to 241 (LSAENEKLQQRVEQLTRDLAGLRRFFKQL) is leucine-zipper.

The protein belongs to the bZIP family. C/EBP subfamily. In terms of assembly, binds DNA as a homodimer and as a heterodimer. Can form stable heterodimers with CEBPB. Can form stable heterodimers with CEBPA and CEBPE. Directly interacts with SPI1/PU.1; this interaction does not affect DNA-binding properties of each partner. Interacts with PRDM16.

Its subcellular location is the nucleus. Its function is as follows. Transcription activator that recognizes two different DNA motifs: the CCAAT homology common to many promoters and the enhanced core homology common to many enhancers. Important transcription factor regulating the expression of genes involved in immune and inflammatory responses. Transcriptional activator that enhances IL6 transcription alone and as heterodimer with CEBPB. The protein is CCAAT/enhancer-binding protein delta (CEBPD) of Bos taurus (Bovine).